Consider the following 107-residue polypeptide: Lipid-anchored protein YDL012C (107 aa).

The segment covering 1 to 18 (MSAQDYYGNSASKQSYSR) has biased composition (polar residues). The segment at 1–86 (MSAQDYYGNS…VQQQPASSGN (86 aa)) is disordered. Residue Ser2 is modified to N-acetylserine. Lys13 is covalently cross-linked (Glycyl lysine isopeptide (Lys-Gly) (interchain with G-Cter in ubiquitin)). The span at 35 to 81 (PSQSQQNYYPPQQQQQQYQQQPQYYQQQQPQYYQQHPQQPIYVQQQP) shows a compositional bias: low complexity.

This sequence belongs to the CYSTM1 family.

Its subcellular location is the cell membrane. This is Lipid-anchored protein YDL012C from Saccharomyces cerevisiae (strain ATCC 204508 / S288c) (Baker's yeast).